The chain runs to 184 residues: Photosystem I assembly protein Ycf4 (184 aa).

Transmembrane regions (helical) follow at residues 21–43 (NFCWAFILLFGALGFFFVGFSSY) and 58–80 (LFIPQGIVMCFYGIAGLFISFYL).

Belongs to the Ycf4 family.

The protein localises to the plastid. It localises to the chloroplast thylakoid membrane. Seems to be required for the assembly of the photosystem I complex. This Marchantia polymorpha (Common liverwort) protein is Photosystem I assembly protein Ycf4.